The sequence spans 82 residues: Small ribosomal subunit protein uS17 (82 aa).

Belongs to the universal ribosomal protein uS17 family. As to quaternary structure, part of the 30S ribosomal subunit.

One of the primary rRNA binding proteins, it binds specifically to the 5'-end of 16S ribosomal RNA. The sequence is that of Small ribosomal subunit protein uS17 from Rhodopseudomonas palustris (strain BisA53).